Consider the following 598-residue polypeptide: MMENNRNYFIAIALSVLIVLGWQFLYMNPRIEAQRKAQEAQKAQQQTEQVQQPAAGGATPAPASGTAPSGQAVATATLEQALAKTPRVAIDTPALSGSINLAGARLDDLKLKGYHETVDDSSPIITLFSPAETKDGYFTELGYIGSDATGSVPGASTLWTAPEGAKLTEKTPVTLSYTNDKGLTFTRTISVDERYMFTIADKVANTGQAPVSLSSYGRVTRYNKPTTPSAYVLHEGFIGVIGDDGLIESKYTAVEKEAVMPAKSTGGWLGITDKYWAATIVPPQASAYEARFSHFSDGQPRYQADYKDDAFTVAPGQSVELKNLVFAGAKEVPVIDGYEASYSIPRFDRLIDWGWFYFITKPMFKLMDFFFRFFGNFGVAILCTTIVVKALFFPLASKQYASMANMKRMQPKMEELKAKFGDDRMGLQQATMQLYKEEKINPIAGCWPVALQIPIFFSLYKVIYITIEMRHAPFFGWIQDLSAPDPTTIVNLFGLLPFTAPTFLHLGVWPLIMGVTMFLQMRMNPTPPDPTQAMIFNWMPLVFMFMLASFPAGLVIYWAWNNTLSVIQQSVIMKRHGVKIELFDNLKGLFRRKTAPSK.

The chain crosses the membrane as a helical span at residues 7-27 (NYFIAIALSVLIVLGWQFLYM). The tract at residues 37–71 (AQEAQKAQQQTEQVQQPAAGGATPAPASGTAPSGQ) is disordered. Residues 40–71 (AQKAQQQTEQVQQPAAGGATPAPASGTAPSGQ) show a composition bias toward low complexity. 4 consecutive transmembrane segments (helical) span residues 373–393 (FFGN…ALFF), 447–467 (WPVA…YITI), 492–512 (LFGL…WPLI), and 538–558 (WMPL…VIYW).

It belongs to the OXA1/ALB3/YidC family. Type 1 subfamily. As to quaternary structure, interacts with the Sec translocase complex via SecD. Specifically interacts with transmembrane segments of nascent integral membrane proteins during membrane integration.

The protein localises to the cell inner membrane. Functionally, required for the insertion and/or proper folding and/or complex formation of integral membrane proteins into the membrane. Involved in integration of membrane proteins that insert both dependently and independently of the Sec translocase complex, as well as at least some lipoproteins. Aids folding of multispanning membrane proteins. In Rhizobium etli (strain CIAT 652), this protein is Membrane protein insertase YidC.